A 793-amino-acid chain; its full sequence is E3 UFM1-protein ligase 1 (793 aa).

An N-acetylalanine modification is found at alanine 2. The interval 2–200 (ADAWEEIRRL…RGLFSAITRP (199 aa)) is mediates interaction with DDRGK1. A required for E3 UFM1-protein ligase activity region spans residues 2–212 (ADAWEEIRRL…VNSLVSKYGF (211 aa)). The tract at residues 121-250 (DRLSEEVNDK…KAVFVPDIYS (130 aa)) is involved in CDK5RAP3-binding. Residues 200–400 (PTAVNSLVSK…NPVHLITEED (201 aa)) are mediates interaction with TRIP4. Residues 410–473 (VNTNKKDKKD…SSHAGKKKPD (64 aa)) form a disordered region. Position 433 is an omega-N-methylarginine (arginine 433). Phosphoserine is present on residues serine 458 and serine 462. The tract at residues 490 to 683 (IPDAPEEFIS…QLKVTEDPAL (194 aa)) is mediates interaction with CDK5RAP3. A Phosphothreonine modification is found at threonine 535. Residues 742–769 (NKKSGQGEDPSSDDLDKEQHDVTNTTRK) form a disordered region. 2 positions are modified to phosphoserine: serine 752 and serine 753. Basic and acidic residues predominate over residues 758-769 (KEQHDVTNTTRK).

The protein belongs to the UFL1 family. As to quaternary structure, catalytic component of the UFM1 ribosome E3 ligase (UREL) complex, composed of UFL1, DDRGK1 and CDK5RAP3. Interacts with E2-like enzyme UFC1. Interacts with RELA. Interacts with NBN; promoting recruitment to double-strand breaks following DNA damage. Interacts (when phosphorylated) with YWHAG/14-3-3-gamma; sequestering UFL1 and preventing its association with PDCD1/PD-1 substrate. In terms of processing, ubiquitinated, leading to its degradation by the proteasome. Interaction with CDK5RAP3 protects both proteins against ubiquitination and degradation via the proteasome. Phosphorylated at Ser-462 by ATM, enhancing protein ligase activity and promoting ATM activation in a positive feedback loop. Phosphorylation at Thr-535 by AMPK promotes its interaction with YWHAG/14-3-3-gamma, thereby preventing UFL1 association with PDCD1/PD-1 substrate. In terms of tissue distribution, ubiquitously expressed with expression detected in brain, skeletal muscle, lung, heart, gall bladder, liver, small intestine, pancreas, spleen and kidney (at protein level). At 8 weeks after birth, high expression in the Purkinje cell layer of the cerebellum.

The protein localises to the endoplasmic reticulum membrane. Its subcellular location is the cytoplasm. The protein resides in the cytosol. It localises to the nucleus. It is found in the chromosome. Functionally, E3 protein ligase that mediates ufmylation, the covalent attachment of the ubiquitin-like modifier UFM1 to lysine residues on target proteins, and which plays a key role in various processes, such as ribosome recycling, response to DNA damage, interferon response or reticulophagy (also called ER-phagy). Catalyzes ufmylation of many protein, such as CD274/PD-L1, CDK5RAP3, CYB5R3, DDRGK1, EIF6, histone H4, MRE11, P4HB, PDCD1/PD-1, TRIP4, RPN1, RPS20/uS10, RPL10/uL16, RPL26/uL24, SYVN1/HRD1 and TP53/p53. As part of the UREL complex, plays a key role in ribosome recycling by catalyzing mono-ufmylation of RPL26/uL24 subunit of the 60S ribosome. Ufmylation of RPL26/uL24 occurs on free 60S ribosomes following ribosome dissociation: it weakens the junction between post-termination 60S subunits and SEC61 translocons, promoting release and recycling of the large ribosomal subunit from the endoplasmic reticulum membrane. Ufmylation of RPL26/uL24 and subsequent 60S ribosome recycling either take place after normal termination of translation or after ribosome stalling during cotranslational translocation at the endoplasmic reticulum. Involved in reticulophagy in response to endoplasmic reticulum stress by mediating ufmylation of proteins such as CYB5R3 and RPN1, thereby promoting lysosomal degradation of ufmylated proteins. Ufmylation in response to endoplasmic reticulum stress is essential for processes such as hematopoiesis, blood vessel morphogenesis or inflammatory response. Mediates ufmylation of DDRGK1 and CDK5RAP3; the role of these modifications is however unclear: as both DDRGK1 and CDK5RAP3 act as substrate adapters for ufmylation, it is uncertain whether ufmylation of these proteins is, a collateral effect or is required for ufmylation. Acts as a negative regulator of T-cell activation by mediating ufmylation and stabilization of PDCD1/PD-1. Also involved in the response to DNA damage: recruited to double-strand break sites following DNA damage and mediates monoufmylation of histone H4 and ufmylation of MRE11. Mediates ufmylation of TP53/p53, promoting its stability. Catalyzes ufmylation of TRIP4, thereby playing a role in nuclear receptor-mediated transcription. Required for hematopoietic stem cell function and hematopoiesis. The polypeptide is E3 UFM1-protein ligase 1 (Rattus norvegicus (Rat)).